Consider the following 115-residue polypeptide: Large ribosomal subunit protein bL19 (115 aa).

This sequence belongs to the bacterial ribosomal protein bL19 family.

In terms of biological role, this protein is located at the 30S-50S ribosomal subunit interface and may play a role in the structure and function of the aminoacyl-tRNA binding site. This chain is Large ribosomal subunit protein bL19, found in Pectobacterium atrosepticum (strain SCRI 1043 / ATCC BAA-672) (Erwinia carotovora subsp. atroseptica).